The chain runs to 235 residues: Purine nucleoside phosphorylase DeoD-type (235 aa).

His-4 contributes to the a purine D-ribonucleoside binding site. Phosphate contacts are provided by residues Gly-20, Arg-24, Arg-43, and 87–90 (RVGT). A purine D-ribonucleoside contacts are provided by residues 179-181 (EME) and 203-204 (SD). Residue Asp-204 is the Proton donor of the active site.

Belongs to the PNP/UDP phosphorylase family. In terms of assembly, homohexamer; trimer of homodimers.

The enzyme catalyses a purine D-ribonucleoside + phosphate = a purine nucleobase + alpha-D-ribose 1-phosphate. It carries out the reaction a purine 2'-deoxy-D-ribonucleoside + phosphate = a purine nucleobase + 2-deoxy-alpha-D-ribose 1-phosphate. Functionally, catalyzes the reversible phosphorolytic breakdown of the N-glycosidic bond in the beta-(deoxy)ribonucleoside molecules, with the formation of the corresponding free purine bases and pentose-1-phosphate. This is Purine nucleoside phosphorylase DeoD-type from Brevibacillus brevis (strain 47 / JCM 6285 / NBRC 100599).